The sequence spans 440 residues: Thymidine phosphorylase (440 aa).

This sequence belongs to the thymidine/pyrimidine-nucleoside phosphorylase family. In terms of assembly, homodimer.

The catalysed reaction is thymidine + phosphate = 2-deoxy-alpha-D-ribose 1-phosphate + thymine. The protein operates within pyrimidine metabolism; dTMP biosynthesis via salvage pathway; dTMP from thymine: step 1/2. The enzymes which catalyze the reversible phosphorolysis of pyrimidine nucleosides are involved in the degradation of these compounds and in their utilization as carbon and energy sources, or in the rescue of pyrimidine bases for nucleotide synthesis. This Escherichia coli (strain K12 / DH10B) protein is Thymidine phosphorylase.